The chain runs to 231 residues: Adenosylcobinamide-GDP ribazoletransferase (231 aa).

The next 6 membrane-spanning stretches (helical) occupy residues 29–49, 53–73, 101–121, 126–146, 167–187, and 211–231; these read ICAY…SMKL, NFLW…LFHF, IGPF…YAFL, IDLI…LHFG, LISL…IISL, and DVLG…LSLI.

Belongs to the CobS family. Mg(2+) serves as cofactor.

It localises to the cell inner membrane. The catalysed reaction is alpha-ribazole + adenosylcob(III)inamide-GDP = adenosylcob(III)alamin + GMP + H(+). The enzyme catalyses alpha-ribazole 5'-phosphate + adenosylcob(III)inamide-GDP = adenosylcob(III)alamin 5'-phosphate + GMP + H(+). It participates in cofactor biosynthesis; adenosylcobalamin biosynthesis; adenosylcobalamin from cob(II)yrinate a,c-diamide: step 7/7. Its function is as follows. Joins adenosylcobinamide-GDP and alpha-ribazole to generate adenosylcobalamin (Ado-cobalamin). Also synthesizes adenosylcobalamin 5'-phosphate from adenosylcobinamide-GDP and alpha-ribazole 5'-phosphate. In Kosmotoga olearia (strain ATCC BAA-1733 / DSM 21960 / TBF 19.5.1), this protein is Adenosylcobinamide-GDP ribazoletransferase.